Reading from the N-terminus, the 178-residue chain is uncharacterized protein (178 aa).

The N-terminal stretch at 1-20 (MKKLLVASLALLILTPVALA) is a signal peptide.

This is an uncharacterized protein from Archaeoglobus fulgidus (strain ATCC 49558 / DSM 4304 / JCM 9628 / NBRC 100126 / VC-16).